The sequence spans 420 residues: Mannose-1-phosphate guanylyltransferase regulatory subunit alpha (420 aa).

The tract at residues 2–251 is substrate-binding domain; that stretch reads LKAVILIGGP…DGIWSQIKSA (250 aa). Positions 85 and 247 each coordinate GDP-alpha-D-mannose. The hexapeptide repeat domain stretch occupies residues 273-420; the sequence is LAKHTPGGPW…SRSFTNQIIL (148 aa). Residues 356-384 are C-loop; the sequence is TPSDPNPNDPRARMDSESLFKDGKLLPAI.

It belongs to the transferase hexapeptide repeat family. In terms of assembly, component of the GMPPA-GMPPB mannose-1-phosphate guanylyltransferase complex composed of 4 GMPPA subunits and 8 GMPPB subunits; the complex is organized into three layers, a central layer made up of 2 GMPPA dimers sandwiched between two layers each made up of 2 GMPPB dimers. As to expression, expressed in fibroblasts (at protein level).

Its subcellular location is the cytoplasm. Regulatory subunit of the GMPPA-GMPPB mannose-1-phosphate guanylyltransferase complex; reduces the catalytic activity of GMPPB when part of the complex. Mediates allosteric feedback inhibition of GMPPB catalytic activity upon binding GDP-alpha-D-mannose. Together with GMPPB regulates GDP-alpha-D-mannose levels. The polypeptide is Mannose-1-phosphate guanylyltransferase regulatory subunit alpha (Homo sapiens (Human)).